The primary structure comprises 2682 residues: 3-methylorcinaldehyde synthase (2682 aa).

The tract at residues 111–272 (LIPLVVIEQL…TEITLYGAFH (162 aa)) is N-terminal acylcarrier protein transacylase domain (SAT). Residue Cys-154 is the Nucleophile; for transacylase activity of the active site. The active-site Proton donor/acceptor; for transacylase activity is His-272. One can recognise a Ketosynthase family 3 (KS3) domain in the interval 401 to 826 (ESDIAVIGMA…GSNASMIVMQ (426 aa)). Active-site for beta-ketoacyl synthase activity residues include Cys-573, His-708, and His-749. A malonyl-CoA:ACP transacylase (MAT) domain region spans residues 947–1237 (FGGQVSTHIG…ITAMTSRALD (291 aa)). Residues 1339–1468 (LTFVGFQDSS…GKIKFTNARD (130 aa)) are N-terminal hotdog fold. Residues 1339–1651 (LTFVGFQDSS…YVKIPKLSMQ (313 aa)) form the PKS/mFAS DH domain. Positions 1367-1649 (LLLGHMTIQT…IAYVKIPKLS (283 aa)) are product template (PT) domain. The active-site Proton acceptor; for dehydratase activity is His-1371. Positions 1496-1651 (VDEVLANRSI…YVKIPKLSMQ (156 aa)) are C-terminal hotdog fold. The Proton donor; for dehydratase activity role is filled by Asp-1555. Positions 1723–1797 (ENITERVKAV…DLMKVVTGVV (75 aa)) constitute a Carrier domain. Ser-1757 bears the O-(pantetheine 4'-phosphoryl)serine mark. A methyltransferase domain region spans residues 2021–2211 (EWPLNQVMYT…AGYGHVYWTE (191 aa)). Positions 2303 to 2548 (VTGATGGLGA…LGWTPADAIA (246 aa)) are NADPH-binding (R) domain.

It functions in the pathway secondary metabolite biosynthesis; terpenoid biosynthesis. Non-reducing polyketide synthase; part of the gene cluster that mediates the biosynthesis of eupenifeldin, a bistropolone meroterpenoid that acts as an antitumor agent. The first step of eupenifeldin biosynthesis is the biosynthesis of 3-methylorcinaldehyde performed by the non-reducing polyketide synthase eupA. Oxidative dearomatization of 3-methylorcinaldehyde likely catalyzed by the FAD-dependent monooxygenase eupB is followed by oxidative ring expansion by the 2-oxoglutarate-dependent dioxygenase eupC to provide the first tropolone metabolite, tropolone stipitaldehyde. In parallel, generation of sesquiterpene alpha-humulene from farnesylpyrophosphate (FPP) is catalyzed by the terpene cyclase eupE. The cytochrome P450 monooxygenase eupD then hydroxylates humulene to humulenol. The putative Diels-Alderase eupF probably catalyzes the formation of the tropolone-humulene skeleton by linking humulenol and the polyketide moiety. The short-chain dehydrogenase/reductase eupG and the flavin-dependent monooxygenase eupH are also essential for eupenifeldin biosynthesis and are likely the additional decorating enzymes of the tropolone-humulene skeleton to produce final eupenifeldin or derivatives. This is 3-methylorcinaldehyde synthase from Phoma sp.